The primary structure comprises 581 residues: MYRTHTCGELNIKDVGKKVVLSGWVDRIRDLGGIKFIILRDRYGVTQVVVNPESPAYEISQKIGREWVIQIEGTVSERPESTKTETQTGEIEVIVEKINVLSKAELPPFYPGDKVSEDLRLKYRYLDLRDKNMNKNLIIRHKMAQAAREFLNKHGFLEIETPYLTKSTPEGARDFLVPSRLQKGKFYALPQSPQLFKQLLMVSGFDKYYQFARCFRDEDLRADRQPEFTQIDIEMSFVEMEDVINLMENFVRYVYSSVGIKLPEKFDRITYDEAMEIYGSDKPDRRFGMELKDLTNYFKDTDFKIIKNVINNGGSIKGFITQIPISRKIASELESYVKEFGLGGLLWFKLENGEISSPTNKFLGGSYENISKDYNLKDGDVVLLAAHTNREQLNTALGALRLRIAKEHFKNLEEGFDALWVVDFPFLEWNEEEKRYVARHHPFTMPKNIDSKPEDIKAYAYDMILNGNEIGGGSIRIHNSEIQRKVFEIIGLTNKEAEEKFGFLLEALKYGAPPHGGIAFGFDRMVSIALRTSSIRDVIAFPKTTSGTCQLTGAPSSVDKSQLEELSIKLFDIKEGGDENE.

Residue Glu170 coordinates L-aspartate. The segment at 194 to 197 (QLFK) is aspartate. Position 216 (Arg216) interacts with L-aspartate. ATP-binding positions include 216–218 (RDE) and Gln225. His440 provides a ligand contact to L-aspartate. Glu469 is an ATP binding site. Arg476 is an L-aspartate binding site. 521–524 (GFDR) provides a ligand contact to ATP.

It belongs to the class-II aminoacyl-tRNA synthetase family. Type 1 subfamily. Homodimer.

It localises to the cytoplasm. The enzyme catalyses tRNA(Asp) + L-aspartate + ATP = L-aspartyl-tRNA(Asp) + AMP + diphosphate. Catalyzes the attachment of L-aspartate to tRNA(Asp) in a two-step reaction: L-aspartate is first activated by ATP to form Asp-AMP and then transferred to the acceptor end of tRNA(Asp). This Thermosipho africanus (strain TCF52B) protein is Aspartate--tRNA ligase.